The following is a 284-amino-acid chain: tRNA pseudouridine synthase B (284 aa).

The active-site Nucleophile is D40.

It belongs to the pseudouridine synthase TruB family. Type 1 subfamily.

It catalyses the reaction uridine(55) in tRNA = pseudouridine(55) in tRNA. Its function is as follows. Responsible for synthesis of pseudouridine from uracil-55 in the psi GC loop of transfer RNAs. This Helicobacter hepaticus (strain ATCC 51449 / 3B1) protein is tRNA pseudouridine synthase B.